Here is a 32-residue protein sequence, read N- to C-terminus: Photosystem II reaction center protein T (32 aa).

Residues 3-23 (ALVYTFLLIGTLMVIFFAVFF) traverse the membrane as a helical segment.

This sequence belongs to the PsbT family. PSII is composed of 1 copy each of membrane proteins PsbA, PsbB, PsbC, PsbD, PsbE, PsbF, PsbH, PsbI, PsbJ, PsbK, PsbL, PsbM, PsbT, PsbX, PsbY, PsbZ, Psb30/Ycf12, at least 3 peripheral proteins of the oxygen-evolving complex and a large number of cofactors. It forms dimeric complexes.

Its subcellular location is the plastid. The protein localises to the chloroplast thylakoid membrane. Functionally, found at the monomer-monomer interface of the photosystem II (PS II) dimer, plays a role in assembly and dimerization of PSII. PSII is a light-driven water plastoquinone oxidoreductase, using light energy to abstract electrons from H(2)O, generating a proton gradient subsequently used for ATP formation. The chain is Photosystem II reaction center protein T from Trieres chinensis (Marine centric diatom).